The chain runs to 318 residues: Mitochondrial thiamine pyrophosphate carrier 1 (318 aa).

The next 6 membrane-spanning stretches (helical) occupy residues 12-28 (GTRR…GLVS), 91-107 (LMYV…YRTT), 125-141 (SFVA…ASTY), 181-197 (GCSA…GLFF), 221-237 (AAGV…VFPL), and 284-301 (GLTV…VTMW). Solcar repeat units follow at residues 12 to 110 (GTRR…TTQA), 120 to 206 (PPPA…LRPV), and 214 to 309 (PFGS…SLHY).

Belongs to the mitochondrial carrier (TC 2.A.29) family.

The protein localises to the mitochondrion inner membrane. Its function is as follows. Mitochondrial transporter that mediates uptake of thiamine pyrophosphate (ThPP) into mitochondria. The chain is Mitochondrial thiamine pyrophosphate carrier 1 (tpc1) from Aspergillus oryzae (strain ATCC 42149 / RIB 40) (Yellow koji mold).